The sequence spans 427 residues: Actin-related protein 3 (427 aa).

It belongs to the actin family. ARP3 subfamily. In terms of assembly, component of the Arp2/3 complex composed of arp2, act2, arc1/p41-ARC, arc2/p34-ARC, arc3/p21-ARC, arc4/p20-ARC and arc5/p16-ARC.

It is found in the cytoplasm. Its subcellular location is the cytoskeleton. The protein resides in the actin patch. Its function is as follows. Functions as ATP-binding component of the Arp2/3 complex which is involved in regulation of actin polymerization and together with an activating nucleation-promoting factor (NPF) mediates the formation of branched actin networks. Seems to contact the pointed end of the daughter actin filament. May be involved in cytokinesis. The protein is Actin-related protein 3 (act2) of Schizosaccharomyces pombe (strain 972 / ATCC 24843) (Fission yeast).